A 162-amino-acid polypeptide reads, in one-letter code: Photosystem II extrinsic protein V (162 aa).

An N-terminal signal peptide occupies residues 1-26; that stretch reads MFNKNFWTSIIIGCLFCTITYSGVNA. The heme c site is built by Cys62, Cys65, His66, and His117.

The protein belongs to the cytochrome c family. PsbV subfamily. PSII is composed of 1 copy each of membrane proteins PsbA, PsbB, PsbC, PsbD, PsbE, PsbF, PsbH, PsbI, PsbJ, PsbK, PsbL, PsbM, PsbT, PsbX, PsbY, PsbZ, Psb30/Ycf12, at least 3 peripheral proteins of the oxygen-evolving complex and a large number of cofactors. It forms dimeric complexes. The cofactor is heme c.

The protein resides in the plastid. It is found in the cyanelle thylakoid membrane. Its function is as follows. One of the extrinsic, lumenal subunits of photosystem II (PSII). PSII is a light-driven water plastoquinone oxidoreductase, using light energy to abstract electrons from H(2)O, generating a proton gradient subsequently used for ATP formation. The extrinsic proteins stabilize the structure of photosystem II oxygen-evolving complex (OEC), the ion environment of oxygen evolution and protect the OEC against heat-induced inactivation. In Cyanophora paradoxa, this protein is Photosystem II extrinsic protein V.